The sequence spans 87 residues: MNSKIFAVLLLLAFLSCVLSDQYCPKSSITACKKMNIRNDCCKDDDCTGGSWCCATPCGNFCKYPTDRPGGKRAAGGKSCKTGYVYY.

A signal peptide spans 1-20 (MNSKIFAVLLLLAFLSCVLS). One can recognise a WAP domain in the interval 21-66 (DQYCPKSSITACKKMNIRNDCCKDDDCTGGSWCCATPCGNFCKYPT). 5 disulfides stabilise this stretch: Cys24–Cys54, Cys32–Cys58, Cys41–Cys53, Cys42–Cys80, and Cys47–Cys62.

It belongs to the venom protein 11 family. 01 (wap-1) subfamily. Contains 5 disulfide bonds. In terms of tissue distribution, expressed by the venom gland.

It is found in the secreted. Its function is as follows. Has antibacterial activity. The polypeptide is U15-lycotoxin-Ls1f (Lycosa singoriensis (Wolf spider)).